Reading from the N-terminus, the 268-residue chain is Small ribosomal subunit protein uS2 (268 aa).

Residues 233–268 form a disordered region; the sequence is SVREEEFAEAAAEGEEKPARRAPAKKAAKKGDDAQA.

The protein belongs to the universal ribosomal protein uS2 family.

This Stenotrophomonas maltophilia (strain K279a) protein is Small ribosomal subunit protein uS2.